The following is a 242-amino-acid chain: Argininosuccinate synthase (242 aa).

The protein belongs to the argininosuccinate synthase family. Type 2 subfamily. As to quaternary structure, homotetramer.

The protein localises to the cytoplasm. The catalysed reaction is L-citrulline + L-aspartate + ATP = 2-(N(omega)-L-arginino)succinate + AMP + diphosphate + H(+). It participates in amino-acid biosynthesis; L-arginine biosynthesis; L-arginine from L-ornithine and carbamoyl phosphate: step 2/3. In Dickeya chrysanthemi (Pectobacterium chrysanthemi), this protein is Argininosuccinate synthase (argG).